A 149-amino-acid chain; its full sequence is Nucleoside diphosphate kinase (149 aa).

6 residues coordinate ATP: lysine 9, phenylalanine 57, arginine 85, threonine 91, arginine 102, and asparagine 112. Histidine 115 acts as the Pros-phosphohistidine intermediate in catalysis.

Belongs to the NDK family. Homotetramer. The cofactor is Mg(2+).

The protein resides in the cytoplasm. It catalyses the reaction a 2'-deoxyribonucleoside 5'-diphosphate + ATP = a 2'-deoxyribonucleoside 5'-triphosphate + ADP. It carries out the reaction a ribonucleoside 5'-diphosphate + ATP = a ribonucleoside 5'-triphosphate + ADP. In terms of biological role, major role in the synthesis of nucleoside triphosphates other than ATP. The ATP gamma phosphate is transferred to the NDP beta phosphate via a ping-pong mechanism, using a phosphorylated active-site intermediate. This is Nucleoside diphosphate kinase from Trichodesmium erythraeum (strain IMS101).